A 351-amino-acid chain; its full sequence is Rhodopsin (351 aa).

The Extracellular portion of the chain corresponds to 1 to 36 (MNGTEGPFFYIPMSNATGLVRSPYDYPQYYLVPPWG). N-linked (GlcNAc...) asparagine glycosylation is found at Asn-2 and Asn-15. The helical transmembrane segment at 37–61 (YACLAAYMFLLILTGFPVNFLTLYV) threads the bilayer. The Cytoplasmic portion of the chain corresponds to 62–73 (TIEHKKLRSPLN). Residues 74 to 96 (YILLNLAVADLFMVIGGFTTTMW) form a helical membrane-spanning segment. Topologically, residues 97-110 (TSLNGYFVFGRMGC) are extracellular. A disulfide bridge connects residues Cys-110 and Cys-187. A helical transmembrane segment spans residues 111–133 (NIEGFFATLGGEIALWSLVVLSM). Positions 134-136 (ERW) match the 'Ionic lock' involved in activated form stabilization motif. The Cytoplasmic segment spans residues 134–152 (ERWIVVCKPISNFRFGENH). A helical membrane pass occupies residues 153–173 (AVMGVAFSWFMAAACAVPPLV). Topologically, residues 174–202 (GWSRYIPEGMQCSCGIDYYTRAEGFNNES) are extracellular. Asn-200 carries an N-linked (GlcNAc...) asparagine glycan. Residues 203 to 224 (FVIYMFVVHFTCPLTIITFCYG) form a helical membrane-spanning segment. Over 225–252 (RLVCTVKEAAAQQQESETTQRAEREVTR) the chain is Cytoplasmic. The chain crosses the membrane as a helical span at residues 253 to 274 (MVIIMFVAFLACWVPYASVAWY). Over 275 to 286 (IFTHQGSEFGPV) the chain is Extracellular. A helical transmembrane segment spans residues 287 to 308 (FMTIPAFFAKSSAVYNPVIYIC). An N6-(retinylidene)lysine modification is found at Lys-296. The Cytoplasmic portion of the chain corresponds to 309–351 (LNKQFRHCMITTLCCGKNPFEEEEGSTTASKTEASSVCSVSPA). Residues Cys-322 and Cys-323 are each lipidated (S-palmitoyl cysteine). Residues 330–351 (EEEGSTTASKTEASSVCSVSPA) form a disordered region. Positions 334–351 (STTASKTEASSVCSVSPA) are enriched in polar residues.

This sequence belongs to the G-protein coupled receptor 1 family. Opsin subfamily. Post-translationally, phosphorylated on some or all of the serine and threonine residues present in the C-terminal region. In terms of processing, contains one covalently linked retinal chromophore.

It is found in the membrane. The protein resides in the cell projection. Its subcellular location is the cilium. It localises to the photoreceptor outer segment. Functionally, photoreceptor required for image-forming vision at low light intensity. While most salt water fish species use retinal as chromophore, most freshwater fish use 3-dehydroretinal, or a mixture of retinal and 3-dehydroretinal. Light-induced isomerization of 11-cis to all-trans retinal triggers a conformational change that activates signaling via G-proteins. Subsequent receptor phosphorylation mediates displacement of the bound G-protein alpha subunit by arrestin and terminates signaling. The sequence is that of Rhodopsin (rho) from Sardina pilchardus (European pilchard).